The following is an 82-amino-acid chain: Acyl carrier protein (82 aa).

The region spanning 4-79 (EKIFQELKNI…DVVDIIESNL (76 aa)) is the Carrier domain. Position 39 is an O-(pantetheine 4'-phosphoryl)serine (Ser39).

The protein belongs to the acyl carrier protein (ACP) family. Post-translationally, 4'-phosphopantetheine is transferred from CoA to a specific serine of apo-ACP by AcpS. This modification is essential for activity because fatty acids are bound in thioester linkage to the sulfhydryl of the prosthetic group.

It is found in the cytoplasm. It participates in lipid metabolism; fatty acid biosynthesis. Its function is as follows. Carrier of the growing fatty acid chain in fatty acid biosynthesis. The polypeptide is Acyl carrier protein (Coprothermobacter proteolyticus (strain ATCC 35245 / DSM 5265 / OCM 4 / BT)).